A 652-amino-acid polypeptide reads, in one-letter code: Proline-rich receptor-like protein kinase PERK1 (652 aa).

The segment at 1–137 is disordered; sequence MSTAPSPGTT…PPSDSSDGLS (137 aa). Over 1–139 the chain is Extracellular; sequence MSTAPSPGTT…SDSSDGLSTG (139 aa). Pro residues predominate over residues 8–19; sequence GTTPSPSPPSPP. Residues Asn-21 and Asn-50 are each glycosylated (N-linked (GlcNAc...) asparagine). Pro residues predominate over residues 26–112; the sequence is TPPPAASSPP…PSPNQGPPNT (87 aa). The span at 113-137 shows a compositional bias: low complexity; it reads PSGSTPRTPSNTKPSPPSDSSDGLS. A helical membrane pass occupies residues 140 to 160; that stretch reads VVVGIAIGGVAILVILTLICL. Topologically, residues 161 to 652 are cytoplasmic; it reads LCKKKRRRRH…TGQGYSGPSL (492 aa). The segment at 169–251 is disordered; that stretch reads RHDDEAAYYV…GGSDYSDLPV (83 aa). A compositionally biased stretch (polar residues) spans 203-213; sequence NASRPSDNHVV. Over residues 216–236 the composition is skewed to pro residues; the sequence is LPPPKPPSPPRKPPPPPPPPA. Thr-269 carries the phosphothreonine modification. Residues 280–559 form the Protein kinase domain; the sequence is FSEANLLGQG…VRALEGNVSL (280 aa). Residues 286–294 and Lys-308 each bind ATP; that span reads LGQGGFGYV. A Phosphotyrosine modification is found at Tyr-353. Residue Asp-404 is the Proton acceptor of the active site. Phosphoserine is present on residues Ser-408 and Ser-437. Thr-438 and Thr-443 each carry phosphothreonine. Tyr-451 is subject to Phosphotyrosine. Over residues 605-616 the composition is skewed to polar residues; it reads YGTTGEYSNPTS. Residues 605-652 form a disordered region; that stretch reads YGTTGEYSNPTSDYGLYPSGSSSEGQATREMEMGKIKKTGQGYSGPSL.

This sequence belongs to the protein kinase superfamily. Ser/Thr protein kinase family. In terms of tissue distribution, mostly expressed in inflorescence bolt, flower buds and siliques, and, to a lower extent, in roots, seedlings and leaves.

The protein resides in the cell membrane. The catalysed reaction is L-seryl-[protein] + ATP = O-phospho-L-seryl-[protein] + ADP + H(+). It catalyses the reaction L-threonyl-[protein] + ATP = O-phospho-L-threonyl-[protein] + ADP + H(+). The polypeptide is Proline-rich receptor-like protein kinase PERK1 (PERK1) (Arabidopsis thaliana (Mouse-ear cress)).